Consider the following 231-residue polypeptide: Large ribosomal subunit protein uL1 (231 aa).

Belongs to the universal ribosomal protein uL1 family. In terms of assembly, part of the 50S ribosomal subunit.

Binds directly to 23S rRNA. The L1 stalk is quite mobile in the ribosome, and is involved in E site tRNA release. Its function is as follows. Protein L1 is also a translational repressor protein, it controls the translation of the L11 operon by binding to its mRNA. This chain is Large ribosomal subunit protein uL1, found in Polaromonas sp. (strain JS666 / ATCC BAA-500).